The primary structure comprises 639 residues: UvrABC system protein C (639 aa).

The GIY-YIG domain maps to 20 to 97; that stretch reads ERSGVYRMFD…IKKFQPKFNI (78 aa). The region spanning 207–242 is the UVR domain; sequence KELQENLSRKMEELSSQMRFEEAAEIRDRIKALSYV.

This sequence belongs to the UvrC family. In terms of assembly, interacts with UvrB in an incision complex.

It localises to the cytoplasm. Its function is as follows. The UvrABC repair system catalyzes the recognition and processing of DNA lesions. UvrC both incises the 5' and 3' sides of the lesion. The N-terminal half is responsible for the 3' incision and the C-terminal half is responsible for the 5' incision. In Rickettsia rickettsii (strain Iowa), this protein is UvrABC system protein C.